A 772-amino-acid chain; its full sequence is Acetamidase regulatory protein (772 aa).

Residues 1–16 (MSSTAQKNSLSPTGNG) are compositionally biased toward polar residues. Positions 1–23 (MSSTAQKNSLSPTGNGVTKRKSG) are disordered. Residues 26 to 59 (ACVHCHRRKVRCDARIVGLPCSNCRSSGKTDCRI) constitute a DNA-binding region (zn(2)-C6 fungal-type). 3 disordered regions span residues 78-99 (RCRP…TISE), 114-148 (AAAP…QECH), and 627-690 (ATSE…QTAV). Low complexity predominate over residues 114–123 (AAAPPASVAP). 2 stretches are compositionally biased toward polar residues: residues 124 to 144 (NVQS…SPQA) and 634 to 658 (PFSS…QHSS). The segment covering 671 to 686 (LLPSYDSPTPDSTSLP) has biased composition (low complexity).

Its subcellular location is the nucleus. In terms of biological role, positively regulates the expression of genes involved in the catabolism of certain amides, omega amino acids, and lactams. This Aspergillus fumigatus (strain ATCC MYA-4609 / CBS 101355 / FGSC A1100 / Af293) (Neosartorya fumigata) protein is Acetamidase regulatory protein (amdR).